We begin with the raw amino-acid sequence, 449 residues long: MANVIVIGAQWGDEGKGKITDLLSRSADVVVRSQGGVNAGHTVVVQGQTFKLHLIPSGILYPDTECIIGSGTVIDPSVLLEEMEQLHALNVSTENLFISQTAHITMPYHRLIDRASEERRGKYKLGTTGRGIGPTYADKSERTGIRVVDLMNGDDLQEKIEWTINYKNAILEKLYNLSPLDPKQVIDEYRGYAEQLRSYVIDSSLKIYEAIQQKKNILFEGAQGTLLDLDHGTYPYVTSSNPIAGGACVGAGIGPTVIDRVIGVAKAYTTRVGEGPFPTELNGEIGELLCDRGAEFGTTTGRRRRCGWFDAVIGRYAVRINGIDCLAITKLDVLDELDEIEVCVAYELDGQICDHFPSDANQFARCQPIYRTLPGWKQSTTNCRSLEDLPKQALDYLKFLAEVMEVSIAIVSLGASRDQTIIVEDPIHGPKRALLDENGVPVSKADTQE.

GTP is bound by residues 12–18 (GDEGKGK) and 40–42 (GHT). Asp-13 (proton acceptor) is an active-site residue. The Mg(2+) site is built by Asp-13 and Gly-40. IMP-binding positions include 13–16 (DEGK), 38–41 (NAGH), Thr-128, Arg-142, Gln-223, Thr-238, and Arg-302. Catalysis depends on His-41, which acts as the Proton donor. 298 to 304 (TTTGRRR) contributes to the substrate binding site. Residues Arg-304, 330-332 (KLD), and 412-414 (SLG) contribute to the GTP site.

This sequence belongs to the adenylosuccinate synthetase family. In terms of assembly, homodimer. Mg(2+) serves as cofactor.

It localises to the cytoplasm. It catalyses the reaction IMP + L-aspartate + GTP = N(6)-(1,2-dicarboxyethyl)-AMP + GDP + phosphate + 2 H(+). Its pathway is purine metabolism; AMP biosynthesis via de novo pathway; AMP from IMP: step 1/2. Plays an important role in the de novo pathway of purine nucleotide biosynthesis. Catalyzes the first committed step in the biosynthesis of AMP from IMP. In Gloeothece citriformis (strain PCC 7424) (Cyanothece sp. (strain PCC 7424)), this protein is Adenylosuccinate synthetase.